Consider the following 159-residue polypeptide: Nucleotide-binding protein PSPPH_4093 (159 aa).

This sequence belongs to the YajQ family.

Functionally, nucleotide-binding protein. The sequence is that of Nucleotide-binding protein PSPPH_4093 from Pseudomonas savastanoi pv. phaseolicola (strain 1448A / Race 6) (Pseudomonas syringae pv. phaseolicola (strain 1448A / Race 6)).